Here is a 329-residue protein sequence, read N- to C-terminus: MLLNGIVAAVITMIITIIGIPRFIMFFHKKKLGGQPTLEDVKQHASKAGTPTMGGFVFVVVSLVVSLVAALVFGKFSPAFITAWWVFAMYAVIGFLDDFLKVFKQINEGLTAKQKMLAQILIGIVSYFIYSHGEKSHIIHILSWQVNIGIFFSIFIIIWLVGWSNAVNLTDGIDGLASITVAISLTAYAVIAVVHQQYDVLLIILSVIGGLLGFFVFNHKPAKIFMGDVGSLALGGFLAIVSILLHAEWTLLLIGAVYVIETLSVMLQVAYFKKTGGKRIFRMTPIHHHFELGGFSGKAVGWSEWKIDIVFWLFTAVLSVIALCIYFAF.

9 helical membrane passes run 1-21, 53-73, 76-96, 109-129, 141-161, 175-195, 198-218, 237-257, and 309-329; these read MLLN…IGIP, MGGF…ALVF, FSPA…IGFL, GLTA…SYFI, ILSW…IWLV, GLAS…AVVH, YDVL…FVFN, FLAI…IGAV, and IVFW…YFAF.

It belongs to the glycosyltransferase 4 family. MraY subfamily. It depends on Mg(2+) as a cofactor.

It is found in the cell membrane. It catalyses the reaction UDP-N-acetyl-alpha-D-muramoyl-L-alanyl-gamma-D-glutamyl-L-lysyl-D-alanyl-D-alanine + di-trans,octa-cis-undecaprenyl phosphate = Mur2Ac(oyl-L-Ala-gamma-D-Glu-L-Lys-D-Ala-D-Ala)-di-trans,octa-cis-undecaprenyl diphosphate + UMP. It functions in the pathway cell wall biogenesis; peptidoglycan biosynthesis. Catalyzes the initial step of the lipid cycle reactions in the biosynthesis of the cell wall peptidoglycan: transfers peptidoglycan precursor phospho-MurNAc-pentapeptide from UDP-MurNAc-pentapeptide onto the lipid carrier undecaprenyl phosphate, yielding undecaprenyl-pyrophosphoryl-MurNAc-pentapeptide, known as lipid I. This is Phospho-N-acetylmuramoyl-pentapeptide-transferase from Lactococcus lactis subsp. cremoris (strain SK11).